The chain runs to 525 residues: GMP synthase [glutamine-hydrolyzing] (525 aa).

One can recognise a Glutamine amidotransferase type-1 domain in the interval 9–207; that stretch reads RILILDFGSQ…VRDICQCEAL (199 aa). Cys-86 functions as the Nucleophile in the catalytic mechanism. Catalysis depends on residues His-181 and Glu-183. Residues 208 to 400 form the GMPS ATP-PPase domain; that stretch reads WTPAKIIDDA…LGLPYDMLYR (193 aa). 235–241 is a binding site for ATP; sequence SGGVDSS.

Homodimer.

It carries out the reaction XMP + L-glutamine + ATP + H2O = GMP + L-glutamate + AMP + diphosphate + 2 H(+). Its pathway is purine metabolism; GMP biosynthesis; GMP from XMP (L-Gln route): step 1/1. Functionally, catalyzes the synthesis of GMP from XMP. The sequence is that of GMP synthase [glutamine-hydrolyzing] from Shigella boydii serotype 18 (strain CDC 3083-94 / BS512).